The primary structure comprises 395 residues: Thyrotropin-releasing hormone receptor (395 aa).

Residues Met-1 to Thr-30 lie on the Extracellular side of the membrane. Residues Asn-3 and Asn-10 are each glycosylated (N-linked (GlcNAc...) asparagine). The helical transmembrane segment at Ile-31–Leu-53 threads the bilayer. The Cytoplasmic segment spans residues Arg-54–Asn-63. The chain crosses the membrane as a helical span at residues Cys-64 to Ile-85. Residues Thr-86 to Leu-101 lie on the Extracellular side of the membrane. Cysteines 100 and 181 form a disulfide. Residues Cys-102 to Ile-123 traverse the membrane as a helical segment. The Cytoplasmic segment spans residues Glu-124–Lys-146. A helical membrane pass occupies residues Ile-147 to Ile-170. Over Ala-171–Met-195 the chain is Extracellular. The chain crosses the membrane as a helical span at residues Met-196 to Ala-217. Topologically, residues Arg-218 to Lys-268 are cytoplasmic. The chain crosses the membrane as a helical span at residues Met-269–Val-290. Residues Asn-291 to Phe-298 are Extracellular-facing. The helical transmembrane segment at Gln-299 to Ile-321 threads the bilayer. The Cytoplasmic portion of the chain corresponds to Tyr-322–Ala-395.

It belongs to the G-protein coupled receptor 1 family.

The protein localises to the cell membrane. In terms of biological role, receptor for thyrotropin-releasing hormone (TRH). Upon ligand binding, this G-protein-coupled receptor triggers activation of the phosphatidylinositol (IP3)-calcium-protein kinase C (PKC) pathway. This is Thyrotropin-releasing hormone receptor (TRHR) from Gallus gallus (Chicken).